A 143-amino-acid polypeptide reads, in one-letter code: Transcriptional regulator MraZ (143 aa).

SpoVT-AbrB domains follow at residues 5 to 47 (TFTP…PKAE) and 76 to 119 (ADEQ…DAES).

It belongs to the MraZ family. In terms of assembly, forms oligomers.

Its subcellular location is the cytoplasm. The protein localises to the nucleoid. The polypeptide is Transcriptional regulator MraZ (Corynebacterium jeikeium (strain K411)).